Reading from the N-terminus, the 84-residue chain is Beta-defensin 119 (84 aa).

The first 21 residues, 1-21 (MKLLYLFLAILLAIEEPVISG), serve as a signal peptide directing secretion. 3 cysteine pairs are disulfide-bonded: Cys-28–Cys-55, Cys-35–Cys-49, and Cys-39–Cys-56.

It belongs to the beta-defensin family.

It is found in the secreted. In terms of biological role, has antibacterial activity. The protein is Beta-defensin 119 (DEFB119) of Hylobates lar (Lar gibbon).